Here is a 609-residue protein sequence, read N- to C-terminus: Threonine--tRNA ligase (609 aa).

The tract at residues 1 to 143 (MRVLYIHAER…SFKPEGAKVE (143 aa)) is editing domain. Catalytic stretches follow at residues 195–491 (PRYL…PRLP) and 196–491 (RYLD…PRLP). Positions 288, 339, and 460 each coordinate Zn(2+).

This sequence belongs to the class-II aminoacyl-tRNA synthetase family. Homodimer. The cofactor is Zn(2+).

The protein resides in the cytoplasm. It catalyses the reaction tRNA(Thr) + L-threonine + ATP = L-threonyl-tRNA(Thr) + AMP + diphosphate + H(+). Catalyzes the attachment of threonine to tRNA(Thr) in a two-step reaction: L-threonine is first activated by ATP to form Thr-AMP and then transferred to the acceptor end of tRNA(Thr). Also edits incorrectly charged L-seryl-tRNA(Thr). This is Threonine--tRNA ligase from Pyrobaculum islandicum (strain DSM 4184 / JCM 9189 / GEO3).